Consider the following 107-residue polypeptide: U1-lycotoxin-Ls1b (107 aa).

An N-terminal signal peptide occupies residues 1-20; the sequence is MMKVLVVVALLVTLISYSSG. Positions 21–41 are excised as a propeptide; sequence EGIDDLEADELLSLMANEQTR. Disulfide bonds link cysteine 44–cysteine 59, cysteine 51–cysteine 68, cysteine 58–cysteine 86, and cysteine 70–cysteine 84.

It belongs to the neurotoxin 19 (CSTX) family. 04 (U1-Lctx) subfamily. Expressed by the venom gland.

The protein localises to the secreted. This chain is U1-lycotoxin-Ls1b, found in Lycosa singoriensis (Wolf spider).